The following is a 430-amino-acid chain: MHLSSLLVAVLLPLALSKPTPRKKPGSFTVHLARRSEAEYARDGPTDLQRAYAKYGIPSTQGMDGYRPEPISRFQGNSKIAGGAPGAKDDGKDEKGEVENNPTSHDIQFLSPVTIGGQPFIMNFDTGSSDTWVMNTDMDDEEAKKDHHLYDPRKSKTYSKLDGLTFSIKYGDKSHASGPVITDVMDIGGATVRKQAIGLPTKVAASLANDKSSDGLVGLAMNKLNTVRPDKQKTFFENLAEDLDEPVFTAQLRKGKMGSYEFGAIDKTKYAGDLVNVPVNNKNGFWEISSALYSVGQLDKIQKVENGTGTAILDTGTTLLILDEEVVKAYYAQVKGARYDASRYAGWVYPCNASMPSLFLAVGHDHMAIIPSSLLTFQNYGPGPDGTDVCYGGLQSNNAGGIQILGDVFFKALFVVFDYRGPSVSLAPHA.

Positions 1–17 (MHLSSLLVAVLLPLALS) are cleaved as a signal peptide. Residues 18-87 (KPTPRKKPGS…SKIAGGAPGA (70 aa)) constitute a propeptide, activation peptide. The disordered stretch occupies residues 59-105 (STQGMDGYRPEPISRFQGNSKIAGGAPGAKDDGKDEKGEVENNPTSH). Residues 87-98 (AKDDGKDEKGEV) show a composition bias toward basic and acidic residues. Residues 109–427 (FLSPVTIGGQ…DYRGPSVSLA (319 aa)) form the Peptidase A1 domain. The active site involves Asp125. Asn306 is a glycosylation site (N-linked (GlcNAc...) asparagine). The active site involves Asp314. Asn352 carries N-linked (GlcNAc...) asparagine glycosylation.

The protein belongs to the peptidase A1 family.

Its subcellular location is the secreted. The sequence is that of Putative aspergillopepsin A-like aspartic endopeptidase MCYG_07979 from Arthroderma otae (strain ATCC MYA-4605 / CBS 113480) (Microsporum canis).